An 88-amino-acid chain; its full sequence is Large ribosomal subunit protein bL27 (88 aa).

The interval 1-24 (MAHKKGTGSTRNGRDSNSKRLGVK) is disordered.

This sequence belongs to the bacterial ribosomal protein bL27 family.

The sequence is that of Large ribosomal subunit protein bL27 from Prochlorococcus marinus (strain MIT 9313).